The primary structure comprises 1092 residues: Isoleucine--tRNA ligase (1092 aa).

The 'HIGH' region motif lies at 53-63; the sequence is PFANGLPHYGH. The 'KMSKS' region motif lies at 613–617; that stretch reads KLSKR. Lys-616 is an ATP binding site.

This sequence belongs to the class-I aminoacyl-tRNA synthetase family. IleS type 2 subfamily. In terms of assembly, monomer. Zn(2+) is required as a cofactor.

It is found in the cytoplasm. It carries out the reaction tRNA(Ile) + L-isoleucine + ATP = L-isoleucyl-tRNA(Ile) + AMP + diphosphate. Functionally, catalyzes the attachment of isoleucine to tRNA(Ile). As IleRS can inadvertently accommodate and process structurally similar amino acids such as valine, to avoid such errors it has two additional distinct tRNA(Ile)-dependent editing activities. One activity is designated as 'pretransfer' editing and involves the hydrolysis of activated Val-AMP. The other activity is designated 'posttransfer' editing and involves deacylation of mischarged Val-tRNA(Ile). This chain is Isoleucine--tRNA ligase, found in Rickettsia peacockii (strain Rustic).